The chain runs to 1226 residues: Cytosolic carboxypeptidase 1 (1226 aa).

Residues 599–619 (TEDDEDTESNSSVEQASVEVP) are disordered. The Peptidase M14 domain occupies 848-1138 (YPYTYSTLQM…KFCVGLLRLK (291 aa)). The Zn(2+) site is built by histidine 920, glutamate 923, and histidine 1017. The active-site Proton donor/acceptor is glutamate 1102. Serine 1168 bears the Phosphoserine mark. A disordered region spans residues 1206–1226 (YEPSAQEEVLSDSELSRTYLP).

The protein belongs to the peptidase M14 family. Interacts with MYLK. Zn(2+) is required as a cofactor.

The protein resides in the cytoplasm. The protein localises to the cytosol. It localises to the nucleus. Its subcellular location is the mitochondrion. It catalyses the reaction (L-glutamyl)(n+1)-gamma-L-glutamyl-L-glutamyl-[protein] + H2O = (L-glutamyl)(n)-gamma-L-glutamyl-L-glutamyl-[protein] + L-glutamate. The enzyme catalyses C-terminal L-alpha-aminoacyl-L-glutamyl-L-glutamyl-[tubulin] + H2O = C-terminal L-alpha-aminoacyl-L-glutamyl-[tubulin] + L-glutamate. Functionally, metallocarboxypeptidase that mediates protein deglutamylation of tubulin and non-tubulin target proteins. Catalyzes the removal of polyglutamate side chains present on the gamma-carboxyl group of glutamate residues within the C-terminal tail of alpha- and beta-tubulin. Specifically cleaves tubulin long-side-chains, while it is not able to remove the branching point glutamate. Also catalyzes the removal of polyglutamate residues from the carboxy-terminus of alpha-tubulin as well as non-tubulin proteins such as MYLK. Involved in KLF4 deglutamylation which promotes KLF4 proteasome-mediated degradation, thereby negatively regulating cell pluripotency maintenance and embryogenesis. The protein is Cytosolic carboxypeptidase 1 of Homo sapiens (Human).